Consider the following 142-residue polypeptide: Interleukin-3 (142 aa).

The first 18 residues, 1–18 (MSHLPILLLLLLVSPGLQ), serve as a signal peptide directing secretion. A glycan (N-linked (GlcNAc...) asparagine) is linked at N33. Cysteines 34 and 102 form a disulfide.

The protein belongs to the IL-3 family. In terms of assembly, monomer. As to expression, activated T-cells, mast cells, natural killer cells.

The protein resides in the secreted. Functionally, granulocyte/macrophage colony-stimulating factors are cytokines that act in hematopoiesis by controlling the production, differentiation, and function of 2 related white cell populations of the blood, the granulocytes and the monocytes-macrophages. In terms of biological role, this CSF induces granulocytes, macrophages, mast cells, stem cells, erythroid cells, eosinophils and megakaryocytes. The protein is Interleukin-3 (IL3) of Callithrix jacchus (White-tufted-ear marmoset).